We begin with the raw amino-acid sequence, 271 residues long: tRNA (guanine-N(7)-)-methyltransferase (271 aa).

4 residues coordinate S-adenosyl-L-methionine: Glu95, Glu120, Asp147, and Asp175. Asp175 is an active-site residue. Residues Lys179, Asp211, and 249–252 (THFE) each bind substrate.

It belongs to the class I-like SAM-binding methyltransferase superfamily. TrmB family.

The enzyme catalyses guanosine(46) in tRNA + S-adenosyl-L-methionine = N(7)-methylguanosine(46) in tRNA + S-adenosyl-L-homocysteine. Its pathway is tRNA modification; N(7)-methylguanine-tRNA biosynthesis. In terms of biological role, catalyzes the formation of N(7)-methylguanine at position 46 (m7G46) in tRNA. This Rhodopirellula baltica (strain DSM 10527 / NCIMB 13988 / SH1) protein is tRNA (guanine-N(7)-)-methyltransferase.